Here is a 343-residue protein sequence, read N- to C-terminus: Anthranilate phosphoribosyltransferase (343 aa).

5-phospho-alpha-D-ribose 1-diphosphate is bound by residues Gly84, 87 to 88 (GD), Thr92, 94 to 97 (NIST), 112 to 120 (KHGNRGVSS), and Ser124. Gly84 contributes to the anthranilate binding site. Ser96 provides a ligand contact to Mg(2+). Residue Asn115 participates in anthranilate binding. Arg170 contributes to the anthranilate binding site. The Mg(2+) site is built by Asp229 and Glu230.

Belongs to the anthranilate phosphoribosyltransferase family. In terms of assembly, homodimer. The cofactor is Mg(2+).

It carries out the reaction N-(5-phospho-beta-D-ribosyl)anthranilate + diphosphate = 5-phospho-alpha-D-ribose 1-diphosphate + anthranilate. The protein operates within amino-acid biosynthesis; L-tryptophan biosynthesis; L-tryptophan from chorismate: step 2/5. Catalyzes the transfer of the phosphoribosyl group of 5-phosphorylribose-1-pyrophosphate (PRPP) to anthranilate to yield N-(5'-phosphoribosyl)-anthranilate (PRA). The chain is Anthranilate phosphoribosyltransferase from Burkholderia thailandensis (strain ATCC 700388 / DSM 13276 / CCUG 48851 / CIP 106301 / E264).